Reading from the N-terminus, the 84-residue chain is Delta-thalatoxin-Hhe1a (84 aa).

Residues methionine 1–alanine 19 form the signal peptide. Positions methionine 20–alanine 33 are excised as a propeptide. Cystine bridges form between cysteine 38-cysteine 78, cysteine 40-cysteine 68, and cysteine 61-cysteine 79.

Belongs to the sea anemone sodium channel inhibitory toxin family. Type II subfamily.

It is found in the secreted. The protein localises to the nematocyst. Binds specifically to the voltage-gated sodium channel (Nav) and delays its inactivation. This Heterodactyla hemprichii (Hemprich's sea anemone) protein is Delta-thalatoxin-Hhe1a.